Here is a 383-residue protein sequence, read N- to C-terminus: MAAEKPSSIFRDFLDSEAAGGVILMVTAALALVIANSPLSGAYFAFLQAKFLGMSVLHGINDGLMAVFFLLVGLEIKREVLGGQLSNWSQRILPGLAALGGMVVPALVFLALNAKSPETVRGWAVPTATDIAFALGVLALLGPRVPASLKIFLTALAIIDDLGAVLVIALFYTAKLSWPALVAVAAILALLAALNRLRVRSLWPYLLVGAGLWGAMLQSGVHATVAGIALALTIPMGDEQHSPLHRLEHGLAPWVGYGIVPIFGFANAGVSFAGLEPSRVLQSLPLGIALGLLFGKQIGVFGTAWMAIWLGFAARPEGAGTAQLYGVAVLCGIGFTMSLFIGALAFGELPASSDAVKVGVLAGSALSAILGSLVLLRCRSSSS.

11 helical membrane passes run 19-39, 56-76, 92-112, 122-142, 151-171, 174-194, 212-232, 255-275, 292-312, 326-346, and 356-376; these read AGGVILMVTAALALVIANSPL, VLHGINDGLMAVFFLLVGLEI, ILPGLAALGGMVVPALVFLAL, GWAVPTATDIAFALGVLALLG, IFLTALAIIDDLGAVLVIALF, AKLSWPALVAVAAILALLAAL, LWGAMLQSGVHATVAGIALAL, VGYGIVPIFGFANAGVSFAGL, LLFGKQIGVFGTAWMAIWLGF, GVAVLCGIGFTMSLFIGALAF, and VKVGVLAGSALSAILGSLVLL.

Belongs to the NhaA Na(+)/H(+) (TC 2.A.33) antiporter family.

The protein resides in the cell inner membrane. The catalysed reaction is Na(+)(in) + 2 H(+)(out) = Na(+)(out) + 2 H(+)(in). Na(+)/H(+) antiporter that extrudes sodium in exchange for external protons. This Paramagnetospirillum magneticum (strain ATCC 700264 / AMB-1) (Magnetospirillum magneticum) protein is Na(+)/H(+) antiporter NhaA.